A 545-amino-acid polypeptide reads, in one-letter code: Chaperonin GroEL (545 aa).

ATP is bound by residues 29 to 32 (TLGP), K50, 86 to 90 (DGTTT), G415, and D495.

The protein belongs to the chaperonin (HSP60) family. In terms of assembly, forms a cylinder of 14 subunits composed of two heptameric rings stacked back-to-back. Interacts with the co-chaperonin GroES.

The protein localises to the cytoplasm. It carries out the reaction ATP + H2O + a folded polypeptide = ADP + phosphate + an unfolded polypeptide.. In terms of biological role, together with its co-chaperonin GroES, plays an essential role in assisting protein folding. The GroEL-GroES system forms a nano-cage that allows encapsulation of the non-native substrate proteins and provides a physical environment optimized to promote and accelerate protein folding. This chain is Chaperonin GroEL, found in Phocaeicola vulgatus (strain ATCC 8482 / DSM 1447 / JCM 5826 / CCUG 4940 / NBRC 14291 / NCTC 11154) (Bacteroides vulgatus).